Here is a 315-residue protein sequence, read N- to C-terminus: Adenine deaminase (315 aa).

Residues His14, His16, and His194 each contribute to the Zn(2+) site. Glu197 (proton donor) is an active-site residue. Asp275 is a Zn(2+) binding site. Asp276 provides a ligand contact to substrate.

It belongs to the metallo-dependent hydrolases superfamily. Adenosine and AMP deaminases family. Adenine deaminase type 2 subfamily. It depends on Zn(2+) as a cofactor.

It carries out the reaction adenine + H2O + H(+) = hypoxanthine + NH4(+). Functionally, catalyzes the hydrolytic deamination of adenine to hypoxanthine. Plays an important role in the purine salvage pathway and in nitrogen catabolism. The polypeptide is Adenine deaminase (Pseudomonas putida (strain W619)).